Here is a 470-residue protein sequence, read N- to C-terminus: Siroheme synthase 2 (470 aa).

The segment at 1-202 (MDYLPMFAKL…EDWQGAEQWL (202 aa)) is precorrin-2 dehydrogenase /sirohydrochlorin ferrochelatase. NAD(+)-binding positions include 22–23 (EV) and 43–44 (PE). Phosphoserine is present on serine 126. A uroporphyrinogen-III C-methyltransferase region spans residues 214 to 470 (GEVVLVGAGP…TCDLKLVSLA (257 aa)). Proline 223 is an S-adenosyl-L-methionine binding site. Aspartate 246 serves as the catalytic Proton acceptor. Lysine 268 acts as the Proton donor in catalysis. Residues 299-301 (GGD), 329-330 (TA), methionine 381, and glycine 410 each bind S-adenosyl-L-methionine.

In the N-terminal section; belongs to the precorrin-2 dehydrogenase / sirohydrochlorin ferrochelatase family. This sequence in the C-terminal section; belongs to the precorrin methyltransferase family.

The catalysed reaction is uroporphyrinogen III + 2 S-adenosyl-L-methionine = precorrin-2 + 2 S-adenosyl-L-homocysteine + H(+). It carries out the reaction precorrin-2 + NAD(+) = sirohydrochlorin + NADH + 2 H(+). The enzyme catalyses siroheme + 2 H(+) = sirohydrochlorin + Fe(2+). It participates in cofactor biosynthesis; adenosylcobalamin biosynthesis; precorrin-2 from uroporphyrinogen III: step 1/1. The protein operates within cofactor biosynthesis; adenosylcobalamin biosynthesis; sirohydrochlorin from precorrin-2: step 1/1. It functions in the pathway porphyrin-containing compound metabolism; siroheme biosynthesis; precorrin-2 from uroporphyrinogen III: step 1/1. Its pathway is porphyrin-containing compound metabolism; siroheme biosynthesis; siroheme from sirohydrochlorin: step 1/1. It participates in porphyrin-containing compound metabolism; siroheme biosynthesis; sirohydrochlorin from precorrin-2: step 1/1. Functionally, multifunctional enzyme that catalyzes the SAM-dependent methylations of uroporphyrinogen III at position C-2 and C-7 to form precorrin-2 via precorrin-1. Then it catalyzes the NAD-dependent ring dehydrogenation of precorrin-2 to yield sirohydrochlorin. Finally, it catalyzes the ferrochelation of sirohydrochlorin to yield siroheme. This is Siroheme synthase 2 from Aeromonas hydrophila subsp. hydrophila (strain ATCC 7966 / DSM 30187 / BCRC 13018 / CCUG 14551 / JCM 1027 / KCTC 2358 / NCIMB 9240 / NCTC 8049).